Reading from the N-terminus, the 575-residue chain is Delta-1-pyrroline-5-carboxylate dehydrogenase, mitochondrial (575 aa).

297-302 (GKIQSG) lines the NAD(+) pocket. The Proton acceptor role is filled by Glu317. Cys351 (nucleophile) is an active-site residue.

Belongs to the aldehyde dehydrogenase family.

Its subcellular location is the mitochondrion inner membrane. The catalysed reaction is L-glutamate 5-semialdehyde + NAD(+) + H2O = L-glutamate + NADH + 2 H(+). It functions in the pathway amino-acid degradation; L-proline degradation into L-glutamate; L-glutamate from L-proline: step 2/2. This chain is Delta-1-pyrroline-5-carboxylate dehydrogenase, mitochondrial (PUT2), found in Saccharomyces cerevisiae (strain ATCC 204508 / S288c) (Baker's yeast).